Consider the following 239-residue polypeptide: O-antigen export system ATP-binding protein RfbE (239 aa).

Residues 28–239 (VRVSTGGRIG…LIYEESMDIL (212 aa)) enclose the ABC transporter domain. 66-73 (GHNGAGKS) contributes to the ATP binding site.

This sequence belongs to the ABC transporter superfamily.

The protein localises to the cell inner membrane. In terms of biological role, may form an ATP-driven O-antigen export apparatus, in association with RfbD. The sequence is that of O-antigen export system ATP-binding protein RfbE (rfbE) from Yersinia enterocolitica.